A 433-amino-acid chain; its full sequence is Homoserine O-acetyltransferase (433 aa).

Positions Asn-41–Pro-385 constitute an AB hydrolase-1 domain. Positions Val-55–Gly-74 are disordered. Ser-166 acts as the Nucleophile in catalysis. Arg-237 provides a ligand contact to substrate. Residues Asp-345 and His-378 contribute to the active site. Asp-379 contacts substrate. The segment at Arg-403–Gly-433 is disordered.

The protein belongs to the AB hydrolase superfamily. MetX family. In terms of assembly, homodimer.

The protein resides in the cytoplasm. It carries out the reaction L-homoserine + acetyl-CoA = O-acetyl-L-homoserine + CoA. It functions in the pathway amino-acid biosynthesis; L-methionine biosynthesis via de novo pathway; O-acetyl-L-homoserine from L-homoserine: step 1/1. Functionally, transfers an acetyl group from acetyl-CoA to L-homoserine, forming acetyl-L-homoserine. The chain is Homoserine O-acetyltransferase from Halorubrum lacusprofundi (strain ATCC 49239 / DSM 5036 / JCM 8891 / ACAM 34).